A 953-amino-acid chain; its full sequence is uncharacterized protein (953 aa).

Helical transmembrane passes span 23 to 43, 103 to 123, 148 to 168, 392 to 412, 435 to 455, 481 to 501, 540 to 560, 575 to 595, 599 to 619, 642 to 662, and 666 to 686; these read VVTS…AFLI, YLFI…PILL, GRYF…LYII, VSAI…VGMI, LLGL…MSFL, AYFA…SAAT, ISSG…LGAF, LSSM…VITF, IISP…YIAY, LFQT…LFAV, and WGPI…HLHL. Residues 910-953 are disordered; sequence VPPPYNDVKDEANGEANGEFDTASKENNPFADPKYKEEESRSAV. Positions 942–953 are enriched in basic and acidic residues; it reads PKYKEEESRSAV. The residue at position 949 (serine 949) is a Phosphoserine.

This sequence belongs to the CSC1 (TC 1.A.17) family.

The protein localises to the membrane. In terms of biological role, acts as an osmosensitive calcium-permeable cation channel. This is an uncharacterized protein from Saccharomyces cerevisiae (strain ATCC 204508 / S288c) (Baker's yeast).